The sequence spans 348 residues: Isopentenyl-diphosphate delta-isomerase (348 aa).

Residue R14–K15 participates in substrate binding. FMN-binding positions include S72, S73–T75, S103, and N131. Substrate is bound at residue S103–R105. Q166 contacts substrate. Residue E167 participates in Mg(2+) binding. Residues K198, T228, G278 to R280, and A299 to R300 contribute to the FMN site.

It belongs to the IPP isomerase type 2 family. As to quaternary structure, homooctamer. Dimer of tetramers. Requires FMN as cofactor. NADPH serves as cofactor. The cofactor is Mg(2+).

The protein localises to the cytoplasm. It catalyses the reaction isopentenyl diphosphate = dimethylallyl diphosphate. In terms of biological role, involved in the biosynthesis of isoprenoids. Catalyzes the 1,3-allylic rearrangement of the homoallylic substrate isopentenyl (IPP) to its allylic isomer, dimethylallyl diphosphate (DMAPP). This is Isopentenyl-diphosphate delta-isomerase from Synechococcus sp. (strain ATCC 27144 / PCC 6301 / SAUG 1402/1) (Anacystis nidulans).